The primary structure comprises 339 residues: Ketol-acid reductoisomerase (NADP(+)) (339 aa).

Residues 1–182 (MRVYYDCDVN…GGGRSGIMKT (182 aa)) enclose the KARI N-terminal Rossmann domain. NADP(+)-binding positions include 24–27 (YGAQ), serine 51, threonine 53, and 83–86 (DELQ). Histidine 108 is a catalytic residue. Glycine 134 contributes to the NADP(+) binding site. The KARI C-terminal knotted domain occupies 183-328 (TFREECETDL…DKIRSMMALT (146 aa)). Mg(2+) is bound by residues aspartate 191, glutamate 195, glutamate 227, and glutamate 231. Serine 252 lines the substrate pocket.

Belongs to the ketol-acid reductoisomerase family. Mg(2+) is required as a cofactor.

It carries out the reaction (2R)-2,3-dihydroxy-3-methylbutanoate + NADP(+) = (2S)-2-acetolactate + NADPH + H(+). It catalyses the reaction (2R,3R)-2,3-dihydroxy-3-methylpentanoate + NADP(+) = (S)-2-ethyl-2-hydroxy-3-oxobutanoate + NADPH + H(+). It functions in the pathway amino-acid biosynthesis; L-isoleucine biosynthesis; L-isoleucine from 2-oxobutanoate: step 2/4. Its pathway is amino-acid biosynthesis; L-valine biosynthesis; L-valine from pyruvate: step 2/4. Its function is as follows. Involved in the biosynthesis of branched-chain amino acids (BCAA). Catalyzes an alkyl-migration followed by a ketol-acid reduction of (S)-2-acetolactate (S2AL) to yield (R)-2,3-dihydroxy-isovalerate. In the isomerase reaction, S2AL is rearranged via a Mg-dependent methyl migration to produce 3-hydroxy-3-methyl-2-ketobutyrate (HMKB). In the reductase reaction, this 2-ketoacid undergoes a metal-dependent reduction by NADPH to yield (R)-2,3-dihydroxy-isovalerate. This chain is Ketol-acid reductoisomerase (NADP(+)), found in Bartonella bacilliformis (strain ATCC 35685 / KC583 / Herrer 020/F12,63).